The sequence spans 889 residues: MVTQILTKMFGTKHDREMKKIQPTVDRINALEPQMAALTDDQLKAKTPEFQERLKKGETVHDILPEAFAVCREASKRVLGMRHYDVQLIGGYVLNRGNIAEMRTGEGKTLVATLPVYLNALTGRGVHVVTVNDYLVRRDAEHMGRLYGWLGLTTGIIVHGLTDQQRKQMYACDITYCTNNELGFDYLRDNMKFDLNDYVQRPHYYAIVDECDSILVDEARTPLIISGPAESSTDKYYAVNQIIPHLKRDVHFTMEEKSKTASLTDAGNAKVEELMGLSNLYDPQNIEILHHVYQGLKAHYLYRLDVEYMIKDGEIVIVDEFTGRLMPGRRWSDGLHQAIEAKEGVEVKSENQTLATITFQNYFRMYEKLSGMTGTADTEAVEFKKIYNLEVNVIPTNRPIQRKDQEDVVYKSEKAKFKAITADIKERMAKGQPILVGTESIEKSEALSAFLRKEGVKHEVLNAKHHEREAEIIAQAGRKGAVTIATNMAGRGTDIMLGGNADMLAKAQVGNDDSPEFAEAVQKIKPQVEAERAEVRSVGGLYIIGTERHESRRIDNQLRGRSGRQGDPGESRFYLSLEDKLMRIFNGERIQKIMEMLNIPEDEPITAKMVTNAIEGAQRKVEGHNFDIRKNLMEYDSVMNAQRNAIYGMRRKVLEGQEIERTTLDWLGDVVSNLLDTHIPEGGKKEEWSLEGLNNSLAQSFGFKIDFATMAVNTETVTDAVKSGVKEVWERQKNSMGPFFEQVQKMILLQSIDHHWKNHLYVIDKLKEGISLRGYAQKDPLIEYKKEAFKAFETLNNTIKSDAIEKVMRVQLVAQQNEQEVLESLRPEEADLDELDYSSPSEADIGHSIPETSEDAPKRKMTFQSGPRDDRPMNREERRRMDKDTKGKR.

Residues glutamine 87, 105-109 (GEGKT), and aspartate 494 contribute to the ATP site. Residues 823-889 (ESLRPEEADL…RMDKDTKGKR (67 aa)) form a disordered region. Residues 867–889 (PRDDRPMNREERRRMDKDTKGKR) show a composition bias toward basic and acidic residues.

The protein belongs to the SecA family. Monomer and homodimer. Part of the essential Sec protein translocation apparatus which comprises SecA, SecYEG and auxiliary proteins SecDF-YajC and YidC.

Its subcellular location is the cell inner membrane. It localises to the cytoplasm. It carries out the reaction ATP + H2O + cellular proteinSide 1 = ADP + phosphate + cellular proteinSide 2.. Part of the Sec protein translocase complex. Interacts with the SecYEG preprotein conducting channel. Has a central role in coupling the hydrolysis of ATP to the transfer of proteins into and across the cell membrane, serving as an ATP-driven molecular motor driving the stepwise translocation of polypeptide chains across the membrane. The polypeptide is Protein translocase subunit SecA (Bdellovibrio bacteriovorus (strain ATCC 15356 / DSM 50701 / NCIMB 9529 / HD100)).